Consider the following 351-residue polypeptide: Protein-glutamate methylesterase/protein-glutamine glutaminase 2 (351 aa).

The region spanning 5 to 122 (RVICVDDSAL…RDGLLDYSEL (118 aa)) is the Response regulatory domain. Asp56 carries the 4-aspartylphosphate modification. Positions 154–341 (LNSSEKLVIL…PLPAMSERIL (188 aa)) constitute a CheB-type methylesterase domain. Residues Ser166, His192, and Asp289 contribute to the active site.

This sequence belongs to the CheB family. In terms of processing, phosphorylated by CheA. Phosphorylation of the N-terminal regulatory domain activates the methylesterase activity.

The protein resides in the cytoplasm. It catalyses the reaction [protein]-L-glutamate 5-O-methyl ester + H2O = L-glutamyl-[protein] + methanol + H(+). The enzyme catalyses L-glutaminyl-[protein] + H2O = L-glutamyl-[protein] + NH4(+). Its function is as follows. Involved in chemotaxis. Part of a chemotaxis signal transduction system that modulates chemotaxis in response to various stimuli. Catalyzes the demethylation of specific methylglutamate residues introduced into the chemoreceptors (methyl-accepting chemotaxis proteins or MCP) by CheR. Also mediates the irreversible deamidation of specific glutamine residues to glutamic acid. The chain is Protein-glutamate methylesterase/protein-glutamine glutaminase 2 from Bordetella avium (strain 197N).